Here is a 971-residue protein sequence, read N- to C-terminus: Kinesin-like protein KIN-6 (971 aa).

Disordered regions lie at residues 1–44 (MEEK…SSLA) and 93–121 (TTTTKSRPRNVWPQNPSKKNNAKENRNPE). A compositionally biased stretch (low complexity) spans 29 to 39 (ATPFTTTTKPP). The 385-residue stretch at 76 to 460 (SLKIFLRIKP…LRQASPYMKI (385 aa)) folds into the Kinesin motor domain. 202 to 209 (GPSGSGKT) contacts ATP. Basic and acidic residues predominate over residues 700–709 (RREAGSEESS). Disordered stretches follow at residues 700–856 (RREA…TEEM) and 872–917 (KTTN…RLQP). The span at 768–783 (QSVNSEENVGIPSTIT) shows a compositional bias: polar residues. Basic and acidic residues predominate over residues 785-797 (VEAEVTDFQRDQN). Residues 809–827 (EVSQDCINSGLSNVQTKSA) show a composition bias toward polar residues. Residues 831 to 842 (RFPDSEKQERNR) show a composition bias toward basic and acidic residues. The span at 903-915 (KKQKNGQKPKRRL) shows a compositional bias: basic residues.

Belongs to the TRAFAC class myosin-kinesin ATPase superfamily. Kinesin family. KIN-6 subfamily.

This is Kinesin-like protein KIN-6 from Arabidopsis thaliana (Mouse-ear cress).